The following is an 828-amino-acid chain: E3 ubiquitin-protein ligase bre-1 (828 aa).

The tract at residues 1-25 (MMKRNNEGIGGEGVANSPPDDTQQK) is disordered. The tract at residues 1–309 (MMKRNNEGIG…SREIEALRAD (309 aa)) is interaction with ubc-1. Coiled-coil stretches lie at residues 53–92 (QAAK…FLKV) and 185–251 (HKEL…TEKQ). Low complexity predominate over residues 269–298 (ASGNATASSSATLNQSEKKMGSPGSPPSES). The segment at 269 to 304 (ASGNATASSSATLNQSEKKMGSPGSPPSESTSREIE) is disordered. Coiled coils occupy residues 311–345 (DEQA…KMET), 460–616 (VNTL…RNLK), and 660–756 (DEVL…NDSA). The RING-type zinc-finger motif lies at 776-815 (CPSCKTRPKDCIMLKCYHLFCETCIKTMYDTRQRKCPKCN).

Belongs to the BRE1 family. In terms of assembly, interacts with ubc-1. Interacts with mrg-1.

The protein resides in the nucleus. It catalyses the reaction S-ubiquitinyl-[E2 ubiquitin-conjugating enzyme]-L-cysteine + [acceptor protein]-L-lysine = [E2 ubiquitin-conjugating enzyme]-L-cysteine + N(6)-ubiquitinyl-[acceptor protein]-L-lysine.. It participates in protein modification; protein ubiquitination. Its function is as follows. E3 ubiquitin-protein ligase that mediates monoubiquitination of 'Lys-117' of histone H2B. H2B 'Lys-117' ubiquitination gives a specific tag for epigenetic transcriptional activation and is also prerequisite for histone H3 'Lys-4' and 'Lys-79' methylation. Involved in regulating stem cell proliferative fate. The protein is E3 ubiquitin-protein ligase bre-1 of Caenorhabditis briggsae.